A 601-amino-acid chain; its full sequence is Serine/threonine-protein phosphatase 2A 65 kDa regulatory subunit A beta isoform (601 aa).

Ala2 is modified (N-acetylalanine). HEAT repeat units lie at residues 20 to 58 (DSLYPIAVLIDELRNEDVQLRLNSIKKLSTIALALGVER), 59 to 96 (TRSELLPFLTDTIYDEDEVLLALAEQLGNFTGLVGGPD), 97 to 135 (FAHCLLPPLENLATVEETVVRDKAVESLRQISQEHTPVA), 136 to 173 (LEAYFVPLVKRLASGDWFTSRTSACGLFSVCYPRASNA), 174 to 212 (VKAEIRQQFRSLCSDDTPMVRRAAASKLGEFAKVLELDS), 213 to 251 (VKSEIVPLFTSLASDEQDSVRLLAVEACVSIAQLLSQDD), 252 to 290 (LETLVMPTLRQAAEDKSWRVRYMVADRFSELQKAMGPKI), 291 to 333 (TLND…RETI), 334 to 372 (IMNQILPYIKELVSDTNQHVKSALASVIMGLSTILGKEN), 373 to 411 (TIEHLLPLFLAQLKDECPDVRLNIISNLDCVNEVIGIRQ), 412 to 450 (LSQSLLPAIVELAEDAKWRVRLAIIEYMPLLAGQLGVEF), 451 to 489 (FDEKLNSLCMAWLVDHVYAIREAATNNLMKLVQKFGTEW), 490 to 528 (AQNTIVPKVLVMANDPNYLHRMTTLFCINALSEACGQEI), 529 to 567 (TTKQMLPIVLKMAGDQVANVRFNVAKSLQKIGPILDTNA), and 568 to 601 (LQGEVKPVLQKLGQDEDMDVKYFAQEAISVLALA).

The protein belongs to the phosphatase 2A regulatory subunit A family. PP2A consists of a common heterodimeric core enzyme, composed of a 36 kDa catalytic subunit (subunit C) and a 65 kDa constant regulatory subunit (PR65 or subunit A), that associates with a variety of regulatory subunits. Proteins that associate with the core dimer include three families of regulatory subunits B (the R2/B/PR55/B55, R3/B''/PR72/PR130/PR59 and R5/B'/B56 families), the 48 kDa variable regulatory subunit, viral proteins, and cell signaling molecules. Interacts with IPO9. Interacts with SGO1. Interacts with RAF1.

In terms of biological role, the PR65 subunit of protein phosphatase 2A serves as a scaffolding molecule to coordinate the assembly of the catalytic subunit and a variable regulatory B subunit. The chain is Serine/threonine-protein phosphatase 2A 65 kDa regulatory subunit A beta isoform (PPP2R1B) from Homo sapiens (Human).